The following is a 31-amino-acid chain: Photosystem I reaction center subunit XII (31 aa).

The chain crosses the membrane as a helical span at residues 6–25 (TQILAALVVALLPAFLAFRL).

It belongs to the PsaM family.

It is found in the cellular thylakoid membrane. The chain is Photosystem I reaction center subunit XII from Synechocystis sp. (strain ATCC 27184 / PCC 6803 / Kazusa).